A 102-amino-acid chain; its full sequence is RNA-binding protein Hfq (102 aa).

One can recognise a Sm domain in the interval 9-68 (DPFLNALRRERVPVSIYLVNGIKLQGQIESFDQFVILLKNTVSQMVYKHAISTVVPSRPV). Residues 63–102 (VPSRPVSHHSNNAGGGSSNYHHGGSAQGSSAPQQDSDDAE) are disordered. Residues 70 to 86 (HHSNNAGGGSSNYHHGG) are compositionally biased toward low complexity.

It belongs to the Hfq family. In terms of assembly, homohexamer.

Functionally, RNA chaperone that binds small regulatory RNA (sRNAs) and mRNAs to facilitate mRNA translational regulation in response to envelope stress, environmental stress and changes in metabolite concentrations. Also binds with high specificity to tRNAs. The protein is RNA-binding protein Hfq of Klebsiella pneumoniae (strain 342).